The sequence spans 213 residues: Leucyl/phenylalanyl-tRNA--protein transferase (213 aa).

It belongs to the L/F-transferase family.

Its subcellular location is the cytoplasm. The enzyme catalyses N-terminal L-lysyl-[protein] + L-leucyl-tRNA(Leu) = N-terminal L-leucyl-L-lysyl-[protein] + tRNA(Leu) + H(+). It carries out the reaction N-terminal L-arginyl-[protein] + L-leucyl-tRNA(Leu) = N-terminal L-leucyl-L-arginyl-[protein] + tRNA(Leu) + H(+). The catalysed reaction is L-phenylalanyl-tRNA(Phe) + an N-terminal L-alpha-aminoacyl-[protein] = an N-terminal L-phenylalanyl-L-alpha-aminoacyl-[protein] + tRNA(Phe). Functionally, functions in the N-end rule pathway of protein degradation where it conjugates Leu, Phe and, less efficiently, Met from aminoacyl-tRNAs to the N-termini of proteins containing an N-terminal arginine or lysine. In Rhodospirillum rubrum (strain ATCC 11170 / ATH 1.1.1 / DSM 467 / LMG 4362 / NCIMB 8255 / S1), this protein is Leucyl/phenylalanyl-tRNA--protein transferase.